A 191-amino-acid polypeptide reads, in one-letter code: Molybdenum cofactor guanylyltransferase (191 aa).

GTP-binding positions include 13–15 (LAG), K26, D72, and D102. D102 serves as a coordination point for Mg(2+).

It belongs to the MobA family. In terms of assembly, monomer. Requires Mg(2+) as cofactor.

The protein localises to the cytoplasm. The catalysed reaction is Mo-molybdopterin + GTP + H(+) = Mo-molybdopterin guanine dinucleotide + diphosphate. Transfers a GMP moiety from GTP to Mo-molybdopterin (Mo-MPT) cofactor (Moco or molybdenum cofactor) to form Mo-molybdopterin guanine dinucleotide (Mo-MGD) cofactor. The polypeptide is Molybdenum cofactor guanylyltransferase (Pseudomonas putida (strain GB-1)).